Reading from the N-terminus, the 208-residue chain is Imidazole glycerol phosphate synthase subunit HisH (208 aa).

In terms of domain architecture, Glutamine amidotransferase type-1 spans 1–206; it reads MIVIIDYDTG…KEVTYSCKSS (206 aa). Residue C79 is the Nucleophile of the active site. Residues H181 and E183 contribute to the active site.

In terms of assembly, heterodimer of HisH and HisF.

It localises to the cytoplasm. It carries out the reaction 5-[(5-phospho-1-deoxy-D-ribulos-1-ylimino)methylamino]-1-(5-phospho-beta-D-ribosyl)imidazole-4-carboxamide + L-glutamine = D-erythro-1-(imidazol-4-yl)glycerol 3-phosphate + 5-amino-1-(5-phospho-beta-D-ribosyl)imidazole-4-carboxamide + L-glutamate + H(+). The enzyme catalyses L-glutamine + H2O = L-glutamate + NH4(+). It functions in the pathway amino-acid biosynthesis; L-histidine biosynthesis; L-histidine from 5-phospho-alpha-D-ribose 1-diphosphate: step 5/9. IGPS catalyzes the conversion of PRFAR and glutamine to IGP, AICAR and glutamate. The HisH subunit catalyzes the hydrolysis of glutamine to glutamate and ammonia as part of the synthesis of IGP and AICAR. The resulting ammonia molecule is channeled to the active site of HisF. This Listeria monocytogenes serovar 1/2a (strain ATCC BAA-679 / EGD-e) protein is Imidazole glycerol phosphate synthase subunit HisH.